We begin with the raw amino-acid sequence, 116 residues long: MRVKTGVVRRRRHKKVLKLARGFYSGRRKHFRKAKEQLERSMYYAFRDRKQKKREFRSLWVVRINAACRMHNTSYSRFMHALKVAGVELDRKVLADMAMNDMQAFESVLESVKEHL.

The protein belongs to the bacterial ribosomal protein bL20 family.

Binds directly to 23S ribosomal RNA and is necessary for the in vitro assembly process of the 50S ribosomal subunit. It is not involved in the protein synthesizing functions of that subunit. This is Large ribosomal subunit protein bL20 from Helicobacter pylori (strain Shi470).